We begin with the raw amino-acid sequence, 283 residues long: Pantothenate synthetase (283 aa).

30–37 (MGALHEGH) contacts ATP. The active-site Proton donor is the His37. Gln61 provides a ligand contact to (R)-pantoate. Gln61 contacts beta-alanine. 150-153 (GRKD) provides a ligand contact to ATP. Gln156 lines the (R)-pantoate pocket. ATP contacts are provided by residues Val179 and 187–190 (MSSR).

The protein belongs to the pantothenate synthetase family. Homodimer.

It localises to the cytoplasm. The enzyme catalyses (R)-pantoate + beta-alanine + ATP = (R)-pantothenate + AMP + diphosphate + H(+). It participates in cofactor biosynthesis; (R)-pantothenate biosynthesis; (R)-pantothenate from (R)-pantoate and beta-alanine: step 1/1. Catalyzes the condensation of pantoate with beta-alanine in an ATP-dependent reaction via a pantoyl-adenylate intermediate. The polypeptide is Pantothenate synthetase (Rhodopirellula baltica (strain DSM 10527 / NCIMB 13988 / SH1)).